The sequence spans 426 residues: 3-isopropylmalate dehydratase large subunit (426 aa).

The [4Fe-4S] cluster site is built by Cys-307, Cys-367, and Cys-370.

The protein belongs to the aconitase/IPM isomerase family. LeuC type 2 subfamily. Heterodimer of LeuC and LeuD. [4Fe-4S] cluster is required as a cofactor.

It carries out the reaction (2R,3S)-3-isopropylmalate = (2S)-2-isopropylmalate. Its pathway is amino-acid biosynthesis; L-leucine biosynthesis; L-leucine from 3-methyl-2-oxobutanoate: step 2/4. Its function is as follows. Catalyzes the isomerization between 2-isopropylmalate and 3-isopropylmalate, via the formation of 2-isopropylmaleate. The protein is 3-isopropylmalate dehydratase large subunit of Aliarcobacter butzleri (strain RM4018) (Arcobacter butzleri).